Here is a 158-residue protein sequence, read N- to C-terminus: Large ribosomal subunit protein uL16 (158 aa).

Belongs to the universal ribosomal protein uL16 family. As to quaternary structure, part of the 50S ribosomal subunit.

Binds 23S rRNA and is also seen to make contacts with the A and possibly P site tRNAs. The polypeptide is Large ribosomal subunit protein uL16 (Prochlorococcus marinus (strain MIT 9303)).